The chain runs to 838 residues: Translation initiation factor IF-2 (838 aa).

Residues 1-235 (MSDTDGKKPL…RSLAAMKREQ (235 aa)) form a disordered region. Residues 18–27 (SGQVKQSFSH) show a composition bias toward polar residues. A compositionally biased stretch (low complexity) spans 50 to 60 (SGSSTTTSSPS). Residues 88–156 (KLREVDDAKR…AARRAEEAKR (69 aa)) show a composition bias toward basic and acidic residues. Residues 162 to 177 (PAAAQPDAADSRASAP) are compositionally biased toward low complexity. A compositionally biased stretch (basic and acidic residues) spans 187-208 (SRKEREREADRDRTTKKDDSRR). Residues 335–509 (PRPPIITIMG…ELLDLRANPK (175 aa)) form the tr-type G domain. A G1 region spans residues 344-351 (GHVDHGKT). 344–351 (GHVDHGKT) serves as a coordination point for GTP. Residues 369 to 373 (GITQH) are G2. Residues 391–394 (DTPG) form a G3 region. GTP is bound by residues 391–395 (DTPGH) and 445–448 (NKID). The G4 stretch occupies residues 445 to 448 (NKID). Residues 481 to 483 (SAK) form a G5 region.

It belongs to the TRAFAC class translation factor GTPase superfamily. Classic translation factor GTPase family. IF-2 subfamily.

It localises to the cytoplasm. Functionally, one of the essential components for the initiation of protein synthesis. Protects formylmethionyl-tRNA from spontaneous hydrolysis and promotes its binding to the 30S ribosomal subunits. Also involved in the hydrolysis of GTP during the formation of the 70S ribosomal complex. The chain is Translation initiation factor IF-2 from Cereibacter sphaeroides (strain ATCC 17025 / ATH 2.4.3) (Rhodobacter sphaeroides).